Consider the following 136-residue polypeptide: Cytochrome b5 (136 aa).

Positions 5–81 constitute a Cytochrome b5 heme-binding domain; it reads TKVFTLAEVS…LDEYYVGDID (77 aa). Heme-binding residues include H40 and H64. A helical membrane pass occupies residues 107–127; that stretch reads FVVKLLQFLVPLIILGVAFGI.

The protein belongs to the cytochrome b5 family. Is highly expressed in developing seeds, moderately expressed in flowers, and is expressed at low levels in the leaf.

The protein resides in the endoplasmic reticulum membrane. It is found in the microsome membrane. Its function is as follows. Cytochrome b5 is a membrane bound hemoprotein which function as an electron carrier for several membrane bound oxygenases. May play a key role in the modification by desaturation of fatty acids in the endoplasmic reticulum, which in the developing seed is utilized for membrane synthesis and in the developmentally regulated production of large amounts of storage lipids. Is involved in the reduction of cytochrome P-450 and may therefore be involved in flavonoid biosynthesis in the petals. The polypeptide is Cytochrome b5 (Nicotiana tabacum (Common tobacco)).